Reading from the N-terminus, the 289-residue chain is Leucine--tRNA ligase subunit beta (289 aa).

Residues 45–49 carry the 'KMSKS' region motif; it reads KMSKS. ATP is bound at residue K48.

This sequence belongs to the class-I aminoacyl-tRNA synthetase family. Seems to consist of an alpha chain and a beta chain.

Its subcellular location is the cytoplasm. The enzyme catalyses tRNA(Leu) + L-leucine + ATP = L-leucyl-tRNA(Leu) + AMP + diphosphate. In Aquifex aeolicus (strain VF5), this protein is Leucine--tRNA ligase subunit beta (leuS').